We begin with the raw amino-acid sequence, 311 residues long: Peptide methionine sulfoxide reductase MsrA/MsrB 2 (311 aa).

Residues 1-155 are peptide methionine sulfoxide reductase A; it reads MHEIYLAGGC…PNGYCHINVN (155 aa). The active site involves cysteine 10. Residues 172–295 enclose the MsrB domain; it reads DEELKKTLSP…NSLSIRFIPK (124 aa). The Nucleophile role is filled by cysteine 284.

This sequence in the N-terminal section; belongs to the MsrA Met sulfoxide reductase family. In the C-terminal section; belongs to the MsrB Met sulfoxide reductase family.

The enzyme catalyses L-methionyl-[protein] + [thioredoxin]-disulfide + H2O = L-methionyl-(S)-S-oxide-[protein] + [thioredoxin]-dithiol. It catalyses the reaction [thioredoxin]-disulfide + L-methionine + H2O = L-methionine (S)-S-oxide + [thioredoxin]-dithiol. The catalysed reaction is L-methionyl-[protein] + [thioredoxin]-disulfide + H2O = L-methionyl-(R)-S-oxide-[protein] + [thioredoxin]-dithiol. Functionally, has an important function as a repair enzyme for proteins that have been inactivated by oxidation. Catalyzes the reversible oxidation-reduction of methionine sulfoxide in proteins to methionine. This chain is Peptide methionine sulfoxide reductase MsrA/MsrB 2 (msrAB2), found in Streptococcus pneumoniae serotype 4 (strain ATCC BAA-334 / TIGR4).